The sequence spans 318 residues: NADH-ubiquinone oxidoreductase chain 1 (318 aa).

8 helical membrane passes run 2 to 22, 68 to 88, 100 to 120, 146 to 166, 171 to 191, 222 to 242, 253 to 273, and 293 to 313; these read FMINLLLMIVPILLAVAFLTL, ISMFIIAPILALALALTMWTP, LGVLFMLAMSSLAVYSILWSG, LAIILLSVLLLNGSFTLPTLI, HMWLIIPSWPLAMMWFISTLA, LFFLAEYANIIMMNIFTTILF, ELYTINFVTKSMLLTISFLWV, and FLPLTLALCMWHVTMPIITAG.

This sequence belongs to the complex I subunit 1 family. As to quaternary structure, core subunit of respiratory chain NADH dehydrogenase (Complex I) which is composed of 45 different subunits.

The protein localises to the mitochondrion inner membrane. The catalysed reaction is a ubiquinone + NADH + 5 H(+)(in) = a ubiquinol + NAD(+) + 4 H(+)(out). Functionally, core subunit of the mitochondrial membrane respiratory chain NADH dehydrogenase (Complex I) which catalyzes electron transfer from NADH through the respiratory chain, using ubiquinone as an electron acceptor. Essential for the catalytic activity and assembly of complex I. The polypeptide is NADH-ubiquinone oxidoreductase chain 1 (MT-ND1) (Hipposideros diadema (Diadem leaf-nosed bat)).